The chain runs to 162 residues: Precorrin-2 dehydrogenase (162 aa).

NAD(+) is bound by residues 20 to 21 and 41 to 42; these read SI and PD.

This sequence belongs to the precorrin-2 dehydrogenase / sirohydrochlorin ferrochelatase family.

It catalyses the reaction precorrin-2 + NAD(+) = sirohydrochlorin + NADH + 2 H(+). It functions in the pathway cofactor biosynthesis; adenosylcobalamin biosynthesis; sirohydrochlorin from precorrin-2: step 1/1. It participates in porphyrin-containing compound metabolism; siroheme biosynthesis; sirohydrochlorin from precorrin-2: step 1/1. Its function is as follows. Catalyzes the dehydrogenation of precorrin-2 to form sirohydrochlorin which is used as a precursor in both siroheme biosynthesis and in the anaerobic branch of adenosylcobalamin biosynthesis. This Bacillus subtilis (strain 168) protein is Precorrin-2 dehydrogenase (sirC).